We begin with the raw amino-acid sequence, 278 residues long: Shikimate dehydrogenase (NADP(+)) (278 aa).

Shikimate is bound by residues 19–21 (SFS) and threonine 66. Lysine 70 functions as the Proton acceptor in the catalytic mechanism. Shikimate contacts are provided by asparagine 91 and aspartate 106. Residues 130–134 (GSGGA) and leucine 222 each bind NADP(+). Tyrosine 224 is a shikimate binding site. Glycine 245 is a binding site for NADP(+).

This sequence belongs to the shikimate dehydrogenase family. Homodimer.

It catalyses the reaction shikimate + NADP(+) = 3-dehydroshikimate + NADPH + H(+). It participates in metabolic intermediate biosynthesis; chorismate biosynthesis; chorismate from D-erythrose 4-phosphate and phosphoenolpyruvate: step 4/7. Its function is as follows. Involved in the biosynthesis of the chorismate, which leads to the biosynthesis of aromatic amino acids. Catalyzes the reversible NADPH linked reduction of 3-dehydroshikimate (DHSA) to yield shikimate (SA). The sequence is that of Shikimate dehydrogenase (NADP(+)) from Methanococcus maripaludis (strain DSM 14266 / JCM 13030 / NBRC 101832 / S2 / LL).